The following is a 258-amino-acid chain: Hydroxyacylglutathione hydrolase (258 aa).

Zn(2+)-binding residues include histidine 56, histidine 58, aspartate 60, histidine 61, histidine 112, aspartate 132, and histidine 170.

Belongs to the metallo-beta-lactamase superfamily. Glyoxalase II family. Monomer. Requires Zn(2+) as cofactor.

The enzyme catalyses an S-(2-hydroxyacyl)glutathione + H2O = a 2-hydroxy carboxylate + glutathione + H(+). It functions in the pathway secondary metabolite metabolism; methylglyoxal degradation; (R)-lactate from methylglyoxal: step 2/2. Its function is as follows. Thiolesterase that catalyzes the hydrolysis of S-D-lactoyl-glutathione to form glutathione and D-lactic acid. The sequence is that of Hydroxyacylglutathione hydrolase from Pseudomonas aeruginosa (strain LESB58).